The chain runs to 164 residues: MINHFDLKKVPPSIKEDFSEILKIINQCFSSHFKVKNNLFYELSFVSEKQSLQLNSSLRNKEYVADIISVCLWENAEIITPLLGEIFICSKKIAKDAIKYDVNFWYLLIRMIIHGLLHLLEFDHEQSDAYEYVTLTIQEQIVNKVIKTAKKKIWKNQELLSLLG.

Positions 114, 118, and 124 each coordinate Zn(2+).

It belongs to the endoribonuclease YbeY family. Zn(2+) is required as a cofactor.

The protein localises to the cytoplasm. In terms of biological role, single strand-specific metallo-endoribonuclease involved in late-stage 70S ribosome quality control and in maturation of the 3' terminus of the 16S rRNA. The chain is Endoribonuclease YbeY from Mycoplasmoides gallisepticum (strain R(low / passage 15 / clone 2)) (Mycoplasma gallisepticum).